Here is a 503-residue protein sequence, read N- to C-terminus: MLRVDQTGTILIKNGTVVNDDRYFKSDVLVENGIIKEISKNIEPKEGIKVVDATDKLLLPGGIDTHTHFQLPFMGTVSVDDFDIGTQAAVAGGTTFIIDFVIPTRGQSLLEAYDQWKKWADEKVNCDYSLHVAITWWSEQVSREMEILVKERGVNSFKCFMAYKNSFMVTDQEMYHIFKRCKELGAIAQVHAENGDMVFEGQKKMLEMGITGPEGHELSRPEALEAEATNRAIVIADSVCTPVYIVHVQSIGAADVICKHRKEGVRVYGEPIAAGLGVDGSHMWNHDWRHAAAFVMGPPIRPDPRTKGVLMDYLARGDLDCVGTDNCTFCADQKAMGKDDFTKIPNGVNGVEDRMSIVWENGVNTGKLTWCQFVRATSSEAARIFNIYPRKGRIDVGCDGDIVIWDPNQSKTISKDTHHHAVDFNIFEGIKVTGIAVTTIVAGNIVWSDNKLSCVKGSGRFVPRPPFGPVFDGIEQRDKVRNELLRKVDRKPYEDDNTKNSSK.

The Zn(2+) site is built by His-66, His-68, and Lys-158. The residue at position 158 (Lys-158) is an N6-carboxylysine. Tyr-163 is a binding site for substrate. Zn(2+) contacts are provided by His-191, His-247, and Asp-325. Asn-346 is a substrate binding site.

The protein belongs to the metallo-dependent hydrolases superfamily. Hydantoinase/dihydropyrimidinase family. Homotetramer. Requires Zn(2+) as cofactor. In terms of processing, carboxylation allows a single lysine to coordinate two zinc ions.

The catalysed reaction is 5,6-dihydrouracil + H2O = 3-(carbamoylamino)propanoate + H(+). Catalyzes the second step of the reductive pyrimidine degradation, the reversible hydrolytic ring opening of dihydropyrimidines. Can catalyze the ring opening of 5,6-dihydrouracil to N-carbamyl-alanine and of 5,6-dihydrothymine to N-carbamyl-amino isobutyrate. This is Dihydropyrimidinase (pyd2) from Dictyostelium discoideum (Social amoeba).